The sequence spans 236 residues: 2-C-methyl-D-erythritol 4-phosphate cytidylyltransferase (236 aa).

It belongs to the IspD/TarI cytidylyltransferase family. IspD subfamily.

The catalysed reaction is 2-C-methyl-D-erythritol 4-phosphate + CTP + H(+) = 4-CDP-2-C-methyl-D-erythritol + diphosphate. The protein operates within isoprenoid biosynthesis; isopentenyl diphosphate biosynthesis via DXP pathway; isopentenyl diphosphate from 1-deoxy-D-xylulose 5-phosphate: step 2/6. In terms of biological role, catalyzes the formation of 4-diphosphocytidyl-2-C-methyl-D-erythritol from CTP and 2-C-methyl-D-erythritol 4-phosphate (MEP). This is 2-C-methyl-D-erythritol 4-phosphate cytidylyltransferase from Burkholderia multivorans (strain ATCC 17616 / 249).